The chain runs to 261 residues: MRHLRFLPQEIISSETGIEILEFVVNTLMGDDPEPPVQPFDPPTLHDLYDLEVDGPEDPNEGAVNGFFTDSMLLAADEGLDINPPPETLVTPGVVVESGRGGKKLPDLGAAEMDLRCYEEGFPPSDDEDGETEQSIHTAVNEGVKAASDVFKLDCPELPGHGCKSCEFHRNNTGMKELLCSLCYMRMHCHFIYSPVSDDESPSPDSTTSPPEIQAPAPANVCKPIPVKPKPGKRPAVDKLEDLLEGGDGPLDLSTRKLPRQ.

The tract at residues 43–51 (PTLHDLYDL) is interaction with RB1 in competition with E2F1. The interval 78–149 (EGLDINPPPE…VNEGVKAASD (72 aa)) is interaction with UBE2I. Positions 106-110 (PDLGA) match the PXLXP motif, interaction with host ZMYND11 motif. The short motif at 115 to 119 (LRCYE) is the LXCXE motif, interaction with host RB1 and TMEM173/STING element. Residues 163–183 (CKSCEFHRNNTGMKELLCSLC) fold into a zinc finger. A disordered region spans residues 197 to 261 (SDDESPSPDS…DLSTRKLPRQ (65 aa)). The span at 203–212 (SPDSTTSPPE) shows a compositional bias: low complexity. The PXDLS motif, CTBP-binding signature appears at 250-254 (PLDLS). Positions 256–261 (RKLPRQ) match the Nuclear localization signal motif.

The protein belongs to the adenoviridae E1A protein family. Interacts with host UBE2I; this interaction interferes with polySUMOylation. Interacts with host RB1; this interaction induces the aberrant dissociation of RB1-E2F1 complex thereby disrupting the activity of RB1 and activating E2F1-regulated genes. Interacts with host ATF7; the interaction enhances ATF7-mediated viral transactivation activity which requires the zinc binding domains of both proteins. Isoform early E1A 32 kDa protein and isoform early E1A 26 kDa protein interact (via N-terminus) with CUL1 and E3 ubiquitin ligase RBX1; these interactions inhibit RBX1-CUL1-dependent elongation reaction of ubiquitin chains and attenuate ubiquitination of SCF(FBXW7) target proteins. Interacts (via PXLXP motif) with host ZMYND11/BS69 (via MYND-type zinc finger); this interaction inhibits E1A mediated transactivation. Interacts with host EP300; this interaction stimulates the acetylation of RB1 by recruiting EP300 and RB1 into a multimeric-protein complex. Interacts with host CTBP1 and CTBP2; this interaction seems to potentiate viral replication. Interacts with host DCAF7. Interacts with host DYRK1A. Interacts with host KPNA4; this interaction allows E1A import into the host nucleus. Interacts with host EP400; this interaction stabilizes MYC. Interacts with host TBP protein; this interaction probably disrupts the TBP-TATA complex. Interacts (via LXCXE motif) with host TMEM173/STING; this interaction impairs the ability of TMEM173/STING to sense cytosolic DNA and promote the production of type I interferon (IFN-alpha and IFN-beta). Interacts (via C-terminus) with host ZBED1/hDREF (via C-terminus); the interaction is direct.

The protein localises to the host nucleus. Plays a role in viral genome replication by driving entry of quiescent cells into the cell cycle. Stimulation of progression from G1 to S phase allows the virus to efficiently use the cellular DNA replicating machinery to achieve viral genome replication. E1A protein has both transforming and trans-activating activities. Induces the disassembly of the E2F1 transcription factor from RB1 by direct competition for the same binding site on RB1, with subsequent transcriptional activation of E2F1-regulated S-phase genes and of the E2 region of the adenoviral genome. Release of E2F1 leads to the ARF-mediated inhibition of MDM2 and causes TP53/p53 to accumulate because it is not targeted for degradation by MDM2-mediated ubiquitination anymore. This increase in TP53, in turn, would arrest the cell proliferation and direct its death but this effect is counteracted by the viral protein E1B-55K. Inactivation of the ability of RB1 to arrest the cell cycle is critical for cellular transformation, uncontrolled cellular growth and proliferation induced by viral infection. Interaction with RBX1 and CUL1 inhibits ubiquitination of the proteins targeted by SCF(FBXW7) ubiquitin ligase complex, and may be linked to unregulated host cell proliferation. The tumorigenesis-restraining activity of E1A may be related to the disruption of the host CtBP-CtIP complex through the CtBP binding motif. Interaction with host TMEM173/STING impairs the ability of TMEM173/STING to sense cytosolic DNA and promote the production of type I interferon (IFN-alpha and IFN-beta). Promotes the sumoylation of host ZBED1/hDREF with SUMO1. The sequence is that of Early E1A protein from Human adenovirus B serotype 7 (HAdV-7).